A 144-amino-acid polypeptide reads, in one-letter code: Granulocyte-macrophage colony-stimulating factor (144 aa).

Positions 1 to 17 (MWLQNLLFLNTVVCSIS) are cleaved as a signal peptide. 2 O-linked (GalNAc...) serine glycosylation sites follow: serine 22 and serine 24. A glycan (O-linked (GalNAc...) threonine) is linked at threonine 27. N-linked (GlcNAc...) asparagine glycosylation is found at asparagine 44, asparagine 45, and asparagine 54. Cystine bridges form between cysteine 71–cysteine 113 and cysteine 105–cysteine 138.

Belongs to the GM-CSF family. Monomer. The signaling GM-CSF receptor complex is a dodecamer of two head-to-head hexamers of two alpha, two beta, and two ligand subunits.

The protein resides in the secreted. Cytokine that stimulates the growth and differentiation of hematopoietic precursor cells from various lineages, including granulocytes, macrophages, eosinophils and erythrocytes. This is Granulocyte-macrophage colony-stimulating factor (CSF2) from Felis catus (Cat).